Reading from the N-terminus, the 214-residue chain is Ribosomal RNA small subunit methyltransferase G (214 aa).

S-adenosyl-L-methionine-binding positions include glycine 58, 109-110 (AE), and arginine 126.

It belongs to the methyltransferase superfamily. RNA methyltransferase RsmG family.

The protein resides in the cytoplasm. Functionally, specifically methylates the N7 position of a guanine in 16S rRNA. The chain is Ribosomal RNA small subunit methyltransferase G from Ureaplasma parvum serovar 3 (strain ATCC 700970).